The primary structure comprises 624 residues: Histone-lysine N-methyltransferase, H3 lysine-9 specific SUVH4 (624 aa).

Disordered regions lie at residues 1-25 (MAGK…VQKV) and 54-86 (DDTE…KGKQ). Residues 149 to 302 (GDLPGIDVGH…FTVYKYRLKR (154 aa)) enclose the YDG domain. The region spanning 381 to 443 (TGCNCRGSCT…KCVNRTSQKR (63 aa)) is the Pre-SET domain. Zn(2+)-binding residues include C383, C385, C389, C395, C397, C425, C429, C431, and C435. Positions 446–594 (FNLEVFRSAK…PMQELTYDYG (149 aa)) constitute an SET domain. Residues 456–458 (KGW), Y493, R548, and 551–552 (NH) contribute to the S-adenosyl-L-methionine site. Zn(2+)-binding residues include C554, C612, C614, and C619. Positions 608–624 (KQLACYCGALNCRKRLY) constitute a Post-SET domain.

The protein belongs to the class V-like SAM-binding methyltransferase superfamily. Histone-lysine methyltransferase family. Suvar3-9 subfamily. Interacts with H3 histone. In terms of tissue distribution, expressed in leaves stems and flowers.

Its subcellular location is the nucleus. The protein resides in the chromosome. The protein localises to the centromere. It carries out the reaction N(6)-methyl-L-lysyl(9)-[histone H3] + S-adenosyl-L-methionine = N(6),N(6)-dimethyl-L-lysyl(9)-[histone H3] + S-adenosyl-L-homocysteine + H(+). It catalyses the reaction L-lysyl(9)-[histone H3] + S-adenosyl-L-methionine = N(6)-methyl-L-lysyl(9)-[histone H3] + S-adenosyl-L-homocysteine + H(+). In terms of biological role, histone methyltransferase. Methylates 'Lys-9' of histone H3. H3 'Lys-9' methylation represents a specific tag for epigenetic transcriptional repression. The silencing mechanism via DNA CpNpG methylation requires the targeting of chromomethylase CMT3 to methylated histones, probably through an interaction with an HP1-like adapter. By its function, KYP is directly required for the maintenance of the DNA CpNpG and asymmetric methylation. Involved in the silencing of transposable elements. The sequence is that of Histone-lysine N-methyltransferase, H3 lysine-9 specific SUVH4 (SUVH4) from Arabidopsis thaliana (Mouse-ear cress).